A 513-amino-acid chain; its full sequence is MTSDDTDDTAGADDVALDPWGSATISDYRALFDEFGIEAFEDVLDGVPTPHSLMRRAIIFGHRDYRRVAAAMRNDEPFAALSGFMPTGDPHIGHKMVFDELIWHQQQGGDAYALIADLEAHSARGLDWAEIDEHAEDYLLSLLALGFDADEGELYRQSTNRELQDLAFELGIEANTSEFEAIYGFGGDTDVSHMQSVVTQMADILYPQLDAPKPTVIPVGPDQDPHVRFARDLAERTRYFKVTEAFASVAFDDDERPLVRAAYDARSQYAADTDQPRCTEAADWLAAEPAAADGVDAATAESVVQKLENAGMEPLRPRVRFFDRQATDEAFTALIDEIAGEKRVFEGHVDAFELSAETARDLALAVEVDHGGYGFVPPSSVYHRFMTGLTGGKMSSSEPASHISLLDDPETGADKVAAATTGGRDTAAEQRERGGEPDDCPVYELYAYLLAGDDDALAEEVYAECANGDRLCGGCKEQAADLMAQFLETHQENREAARDVLAELDIDLDSARV.

The short motif at 86 to 94 (PTGDPHIGH) is the 'HIGH' region element. Positions 393–397 (KMSSS) match the 'KMSKS' region motif.

Belongs to the class-I aminoacyl-tRNA synthetase family.

The protein localises to the cytoplasm. It carries out the reaction tRNA(Trp) + L-tryptophan + ATP = L-tryptophyl-tRNA(Trp) + AMP + diphosphate + H(+). The polypeptide is Tryptophan--tRNA ligase 1 (Halobacterium salinarum (strain ATCC 700922 / JCM 11081 / NRC-1) (Halobacterium halobium)).